The chain runs to 250 residues: Orotidine 5'-phosphate decarboxylase (250 aa).

Substrate is bound by residues Asp9, Lys40, 67–76 (DLKFHDIPNT), Thr132, Arg190, Gln204, Gly224, and Arg225. Lys69 functions as the Proton donor in the catalytic mechanism.

It belongs to the OMP decarboxylase family. Type 1 subfamily. In terms of assembly, homodimer.

The catalysed reaction is orotidine 5'-phosphate + H(+) = UMP + CO2. The protein operates within pyrimidine metabolism; UMP biosynthesis via de novo pathway; UMP from orotate: step 2/2. In terms of biological role, catalyzes the decarboxylation of orotidine 5'-monophosphate (OMP) to uridine 5'-monophosphate (UMP). This is Orotidine 5'-phosphate decarboxylase from Nitratidesulfovibrio vulgaris (strain DSM 19637 / Miyazaki F) (Desulfovibrio vulgaris).